The following is a 271-amino-acid chain: Insulin-like growth factor-binding protein 5 (271 aa).

The N-terminal stretch at 1–19 is a signal peptide; it reads MVISVVLLLLAAYAVPAQG. The region spanning 22-102 is the IGFBP N-terminal domain; that stretch reads SFVHCEPCDE…LHGRGVCLNE (81 aa). Cystine bridges form between Cys26–Cys52, Cys29–Cys54, Cys37–Cys55, Cys44–Cys58, Cys66–Cys79, and Cys73–Cys99. Basic and acidic residues predominate over residues 109–121; that stretch reads TKIERDSREHEEP. The disordered stretch occupies residues 109–129; that stretch reads TKIERDSREHEEPTTSEMAEE. A Phosphoserine modification is found at Ser115. The Thyroglobulin type-1 domain maps to 188–262; that stretch reads QGPCRRHMEA…MEYVDGDFQC (75 aa). Cystine bridges form between Cys191/Cys218, Cys229/Cys240, and Cys242/Cys262.

In terms of assembly, interacts with IGF1; this interaction enhances the growth stimulatory effects of IGF1 on fibroblasts. Interacts with CAV1; this interaction allows trafficking of IGFBP5 from the plasma membrane to the nucleus. Interacts with NCL; this interaction is necessary for IGFBP5 localization to the nucleus. As to expression, most abundant in kidney, uterus and gastrocnemius muscle.

The protein localises to the secreted. The protein resides in the cytoplasm. Its subcellular location is the nucleus. In terms of biological role, multifunctional protein that plays a critical role in regulating the availability of IGFs to their receptors and thereby regulates IGF-mediated cellular processes including proliferation, differentiation, and apoptosis in a cell-type specific manner. Increases the cell proliferation of osteoblasts, intestinal smooth muscle cells and neuroblastoma cells. Enhances adhesion and survival of epithelial cells but decreases adhesion of mesenchymal cells. Once secreted, acts as a major mediator of mTORC1-dependent feedback inhibition of IGF1 signaling. Also plays a role in the induction of extracellular matrix (ECM) production and deposition independently of its nuclear translocation and binding to IGFs. Acts itself as a growth factor that can act independently of IGFs to regulate bone formation. Acts as a ligand for the ROR1 receptor which triggers formation of ROR1/HER2 heterodimer to enhance CREB oncogenic signaling. In Mus musculus (Mouse), this protein is Insulin-like growth factor-binding protein 5 (Igfbp5).